The chain runs to 307 residues: Polysialic acid O-acetyltransferase (307 aa).

The segment covering 1–90 (MLRLKTQDSR…LKTQDSRLKT (90 aa)) has biased composition (basic and acidic residues). The segment at 1-95 (MLRLKTQDSR…SRLKTQDSFS (95 aa)) is disordered. 13 consecutive repeat copies span residues 3–9 (RLKTQDS), 10–16 (RLKTQDS), 17–23 (RLKTQDS), 24–30 (RLKTQDS), 31–37 (RLKTQDS), 38–44 (RLKTQDS), 45–51 (RLKTQDS), 52–58 (RLKTQDS), 59–65 (RLKTQDS), 66–72 (RLKTQDS), 73–79 (RLKTQDS), 80–86 (RLKTQDS), and 87–93 (RLKTQDS). Residues 3-93 (RLKTQDSRLK…QDSRLKTQDS (91 aa)) form a 13 X 7 AA tandem repeat of RLKTQDS encoded by a 7 nucleotide repeat region. Acetyl-CoA contacts are provided by residues 208–210 (DGH), R237, K243, K261, and K278.

The protein belongs to the transferase hexapeptide repeat family. Homotrimer. Hexamer formed by two homotrimers.

The catalysed reaction is [N-acetyl-alpha-D-neuraminosyl-(2-&gt;8)](n) + n acetyl-CoA = [N,O(9)-diacetyl-alpha-D-neuraminosyl-(2-&gt;8)](n) + n CoA. It catalyses the reaction [N-acetyl-alpha-D-neuraminosyl-(2-&gt;8)](n) + n acetyl-CoA = [O(7),N-diacetyl-alpha-D-neuraminosyl-(2-&gt;8)](n) + n CoA. Functionally, catalyzes the O-acetylation of capsular polymeric sialic acid. Shows high substrate specificity toward polymers of sialic acid that contains a large number of residues. In Escherichia coli O1:K1 / APEC, this protein is Polysialic acid O-acetyltransferase.